The sequence spans 111 residues: NADH-ubiquinone oxidoreductase chain 4 (111 aa).

The chain crosses the membrane as a helical span at residues 35 to 55 (LITSLFSWLDITVFLTGLSAF).

Belongs to the complex I subunit 4 family.

Its subcellular location is the mitochondrion membrane. The enzyme catalyses a ubiquinone + NADH + 5 H(+)(in) = a ubiquinol + NAD(+) + 4 H(+)(out). Its function is as follows. Core subunit of the mitochondrial membrane respiratory chain NADH dehydrogenase (Complex I) that is believed to belong to the minimal assembly required for catalysis. Complex I functions in the transfer of electrons from NADH to the respiratory chain. The immediate electron acceptor for the enzyme is believed to be ubiquinone. This Caiman crocodilus (Spectacled caiman) protein is NADH-ubiquinone oxidoreductase chain 4 (MT-ND4).